We begin with the raw amino-acid sequence, 301 residues long: Fluoroquinolones export ATP-binding protein MT2762 (301 aa).

The region spanning 18 to 246 is the ABC transporter domain; that stretch reads IRVRGLTFRY…RSRRRVRVEY (229 aa). 52 to 59 lines the ATP pocket; the sequence is GPSGAGKS.

The protein belongs to the ABC transporter superfamily. As to quaternary structure, the complex is composed of 2 ATP-binding proteins and 2 transmembrane proteins.

Its subcellular location is the cell membrane. Its function is as follows. Part of the ABC transporter complex involved in fluoroquinolones export. Probably responsible for energy coupling to the transport system. In Mycobacterium tuberculosis (strain CDC 1551 / Oshkosh), this protein is Fluoroquinolones export ATP-binding protein MT2762.